Consider the following 534-residue polypeptide: C-type lectin domain family 18 member A (534 aa).

The segment at 47–88 (GALPVAGKPEPMARSLASAPVSPWHHMDRGSTTPAKARSHSA) is disordered. In terms of domain architecture, SCP spans 139 to 270 (LTAHNRLRSR…EAMEAFVCAY (132 aa)). Residues 316-349 (PRNPCRMSCRNLGHLNISTCRCHCQPGYTGRYCQ) form the EGF-like domain. 4 disulfides stabilise this stretch: C324/C337, C339/C348, C415/C520, and C496/C512. The 128-residue stretch at 394-521 (IDGDCFMVSP…CKTRNRYICQ (128 aa)) folds into the C-type lectin domain.

It is found in the secreted. This chain is C-type lectin domain family 18 member A (Clec18a), found in Mus musculus (Mouse).